Consider the following 303-residue polypeptide: Carboxypeptidase B (303 aa).

The 294-residue stretch at 5-298 folds into the Peptidase M14 domain; the sequence is SYHDYDEINA…EGVKVVANFV (294 aa). The Zn(2+) site is built by His-63 and Glu-66. Residues 63–66, Arg-118, and 136–137 contribute to the substrate site; these read HARE and NR. Residue His-189 coordinates Zn(2+). Residues 190-191 and Tyr-241 contribute to the substrate site; that span reads SY. Glu-264 (proton donor/acceptor) is an active-site residue.

This sequence belongs to the peptidase M14 family. It depends on Zn(2+) as a cofactor.

The protein resides in the secreted. The catalysed reaction is Preferential release of a C-terminal lysine or arginine amino acid.. The polypeptide is Carboxypeptidase B (Astacus astacus (Noble crayfish)).